The chain runs to 238 residues: Phosphatidylcholine synthase (238 aa).

At 1–16 (MPVNLSMTPINKAKAW) the chain is on the cytoplasmic side. The chain crosses the membrane as a helical span at residues 17 to 37 (GVHAVTASGVILALLALLALV). Residues 38-41 (DNKP) lie on the Periplasmic side of the membrane. A helical membrane pass occupies residues 42–62 (QACLLWLGLALLVDGLDGTLA). The Cytoplasmic portion of the chain corresponds to 63 to 75 (RKYEVKEMLPHFD). A helical transmembrane segment spans residues 76 to 96 (GSVLDLVIDYLTYVFIPAIFI). The Periplasmic segment spans residues 97–104 (YRYIPLPE). The chain crosses the membrane as a helical span at residues 105 to 125 (HFELLAVGVILVSSLFCFCNV). Residues 126 to 132 (NMKSTDN) lie on the Cytoplasmic side of the membrane. A helical transmembrane segment spans residues 133 to 153 (YFVGFPAAWNVVAVYFYVLDL). Over 154–155 (HP) the chain is Periplasmic. The helical transmembrane segment at 156–176 (WVNLATVLVLAALTLTRMKFL) threads the bilayer. At 177–183 (HPFRVRQ) the chain is on the cytoplasmic side. Residues 184 to 204 (FMPLNIAVTFVWLISSGLLIV) traverse the membrane as a helical segment. Residues 205–209 (QQPAD) are Periplasmic-facing. A helical transmembrane segment spans residues 210–230 (LPILLGLWFAASAYFVGICLW). The Cytoplasmic segment spans residues 231–238 (RSAREWFG).

The protein belongs to the CDP-alcohol phosphatidyltransferase class-I family. The cofactor is Mn(2+).

It is found in the cell inner membrane. The enzyme catalyses a CDP-1,2-diacyl-sn-glycerol + choline = a 1,2-diacyl-sn-glycero-3-phosphocholine + CMP + H(+). In terms of biological role, condenses choline with CDP-diglyceride to produce phosphatidylcholine and CMP. In Pseudomonas aeruginosa (strain ATCC 15692 / DSM 22644 / CIP 104116 / JCM 14847 / LMG 12228 / 1C / PRS 101 / PAO1), this protein is Phosphatidylcholine synthase.